The sequence spans 98 residues: HssA/B-like protein 33 (98 aa).

Disordered regions lie at residues 1–29 (MTLF…SGTS) and 60–98 (AKSS…SCSC). Residues 60–72 (AKSSGGSCGGKGG) show a composition bias toward gly residues. Basic residues predominate over residues 73–88 (PHNHGHGNGHGPHGHG). Gly residues predominate over residues 89–98 (GKGSGGSCSC).

The protein belongs to the hssA/B family.

The polypeptide is HssA/B-like protein 33 (hssl33) (Dictyostelium discoideum (Social amoeba)).